We begin with the raw amino-acid sequence, 195 residues long: Putative NADH dehydrogenase/NAD(P)H nitroreductase Bcep18194_B1060 (195 aa).

This sequence belongs to the nitroreductase family. HadB/RutE subfamily. It depends on FMN as a cofactor.

The chain is Putative NADH dehydrogenase/NAD(P)H nitroreductase Bcep18194_B1060 from Burkholderia lata (strain ATCC 17760 / DSM 23089 / LMG 22485 / NCIMB 9086 / R18194 / 383).